The chain runs to 132 residues: Arginine decarboxylase proenzyme (132 aa).

The Schiff-base intermediate with substrate; via pyruvic acid role is filled by serine 70. Serine 70 carries the pyruvic acid (Ser); by autocatalysis modification. The Proton acceptor; for processing activity role is filled by histidine 75. Catalysis depends on cysteine 90, which acts as the Proton donor; for catalytic activity.

Belongs to the prokaryotic AdoMetDC family. Type 1 subfamily. Heterooctamer of four alpha and four beta chains arranged as a tetramer of alpha/beta heterodimers. Pyruvate is required as a cofactor. Is synthesized initially as an inactive proenzyme. Formation of the active enzyme involves a self-maturation process in which the active site pyruvoyl group is generated from an internal serine residue via an autocatalytic post-translational modification. Two non-identical subunits are generated from the proenzyme in this reaction, and the pyruvate is formed at the N-terminus of the alpha chain, which is derived from the carboxyl end of the proenzyme. The post-translation cleavage follows an unusual pathway, termed non-hydrolytic serinolysis, in which the side chain hydroxyl group of the serine supplies its oxygen atom to form the C-terminus of the beta chain, while the remainder of the serine residue undergoes an oxidative deamination to produce ammonia and the pyruvoyl group blocking the N-terminus of the alpha chain.

The catalysed reaction is L-arginine + H(+) = agmatine + CO2. It participates in amine and polyamine biosynthesis; agmatine biosynthesis; agmatine from L-arginine: step 1/1. Specifically catalyzes the decarboxylation of L-arginine to agmatine. Has no S-adenosylmethionine decarboxylase (AdoMetDC) activity. This Aeropyrum pernix (strain ATCC 700893 / DSM 11879 / JCM 9820 / NBRC 100138 / K1) protein is Arginine decarboxylase proenzyme.